Consider the following 143-residue polypeptide: Peptide methionine sulfoxide reductase MsrB (143 aa).

A MsrB domain is found at 16 to 139; the sequence is DAELRRRLTP…NSAALNFESR (124 aa). Residues Cys55, Cys58, Cys104, and Cys107 each contribute to the Zn(2+) site. The Nucleophile role is filled by Cys128.

Belongs to the MsrB Met sulfoxide reductase family. Zn(2+) is required as a cofactor.

It catalyses the reaction L-methionyl-[protein] + [thioredoxin]-disulfide + H2O = L-methionyl-(R)-S-oxide-[protein] + [thioredoxin]-dithiol. The sequence is that of Peptide methionine sulfoxide reductase MsrB from Burkholderia lata (strain ATCC 17760 / DSM 23089 / LMG 22485 / NCIMB 9086 / R18194 / 383).